The primary structure comprises 199 residues: Outer dense fiber protein 4 (199 aa).

Over residues Met-1–Lys-14 the composition is skewed to basic and acidic residues. The interval Met-1–Glu-25 is disordered. Ser-53 carries the post-translational modification Phosphoserine. A run of 3 helical transmembrane segments spans residues Ile-68–Val-88, Val-109–Tyr-128, and Leu-159–Leu-179.

It is found in the membrane. Functionally, component of the outer dense fibers (ODF) of spermatozoa which could be involved in sperm tail structure, sperm movement and general organization of cellular cytoskeleton. This Bos taurus (Bovine) protein is Outer dense fiber protein 4 (ODF4).